The following is a 499-amino-acid chain: Protein dml1 (499 aa).

The protein belongs to the misato family.

The protein resides in the mitochondrion. Its function is as follows. Involved in the partitioning of the mitochondrial organelle and mitochondrial DNA (mtDNA) inheritance. The sequence is that of Protein dml1 (dml1) from Aspergillus clavatus (strain ATCC 1007 / CBS 513.65 / DSM 816 / NCTC 3887 / NRRL 1 / QM 1276 / 107).